The primary structure comprises 164 residues: uncharacterized protein (164 aa).

This is an uncharacterized protein from Saccharomyces cerevisiae (strain ATCC 204508 / S288c) (Baker's yeast).